Reading from the N-terminus, the 711-residue chain is Pentatricopeptide repeat-containing protein At5g46580, chloroplastic (711 aa).

The N-terminal 43 residues, 1-43 (MATVLTTAIDVCFNPQNSDTKKHSLFLKPSLFRQSRSRKLNIS), are a transit peptide targeting the chloroplast. PPR repeat units follow at residues 185 to 219 (ETIF…GVEL), 220 to 254 (DNIT…GLMP), 255 to 289 (DEVT…GWKP), 290 to 324 (DAIA…DVKP), 325 to 359 (NVVV…GLTP), 360 to 394 (NEKT…KWPM), 395 to 425 (DFIL…MKES), 431 to 465 (DNFS…GVQV), 466 to 500 (NVMG…GVKP), and 501 to 535 (DDRL…NKKL). One can recognise a Smr domain in the interval 614-696 (LDVRSLSVGA…IFVATKEDLV (83 aa)).

It belongs to the PPR family. P subfamily.

The protein resides in the plastid. It is found in the chloroplast. The protein is Pentatricopeptide repeat-containing protein At5g46580, chloroplastic of Arabidopsis thaliana (Mouse-ear cress).